Reading from the N-terminus, the 182-residue chain is Negative transcriptional regulator PadR (182 aa).

The protein belongs to the PadR family. As to quaternary structure, homodimer.

The protein localises to the cytoplasm. With respect to regulation, padR repressor activity is inhibited in the presence of phenolic acids, which directly modulate PadR binding to the promoter of padC, leading to the dissociation of PadR from the operator DNA and expression of padC. In the presence of MgCl(2), binding is not altered by phenolic acids. Functionally, transcriptional regulator involved in the regulation of the metabolism of phenolic acids. In the absence of phenolic acids, represses the expression of padC, which encodes a phenolic acid decarboxylase (PAD) involved in the detoxification of harmful phenolic acids. Acts by binding to the padC promoter region, preventing the transcription of the gene. The sequence is that of Negative transcriptional regulator PadR from Bacillus subtilis (strain 168).